Consider the following 384-residue polypeptide: Dual specificity protein phosphatase 9 (384 aa).

Ser16 is subject to Phosphoserine. Residues 18–139 (PRPRLLLLDC…FQAECPHLCE (122 aa)) enclose the Rhodanese domain. Positions 203–346 (FPVQILPNLY…LLDFERSLRL (144 aa)) constitute a Tyrosine-protein phosphatase domain. Residue Ser262 is modified to Phosphoserine. Cys290 (phosphocysteine intermediate) is an active-site residue. The segment at 348-384 (ERHSQEQGSGGQASAASNPPSFFTTPTSDGAFELAPT) is disordered. Phosphoserine is present on Ser351. Over residues 359-375 (QASAASNPPSFFTTPTS) the composition is skewed to polar residues.

Belongs to the protein-tyrosine phosphatase family. Non-receptor class dual specificity subfamily.

It is found in the cytoplasm. The catalysed reaction is O-phospho-L-tyrosyl-[protein] + H2O = L-tyrosyl-[protein] + phosphate. The enzyme catalyses O-phospho-L-seryl-[protein] + H2O = L-seryl-[protein] + phosphate. It catalyses the reaction O-phospho-L-threonyl-[protein] + H2O = L-threonyl-[protein] + phosphate. Its function is as follows. Inactivates MAP kinases. Has a specificity for the ERK family. In Homo sapiens (Human), this protein is Dual specificity protein phosphatase 9 (DUSP9).